A 106-amino-acid polypeptide reads, in one-letter code: UPF0145 protein APL_0465 (106 aa).

This sequence belongs to the UPF0145 family.

The polypeptide is UPF0145 protein APL_0465 (Actinobacillus pleuropneumoniae serotype 5b (strain L20)).